The chain runs to 211 residues: Protein G12 (211 aa).

Positions 1-19 are cleaved as a signal peptide; sequence MKIAAFVVACLVATSAVSC.

This is Protein G12 from Anopheles gambiae (African malaria mosquito).